The following is a 352-amino-acid chain: Putative killer cell immunoglobulin-like receptor-like protein KIR3DX1 (352 aa).

The signal sequence occupies residues 1–16 (MAPKLITVLCLGFCLN). Ig-like C2-type domains follow at residues 17–112 (QKIC…NSLK) and 224–311 (PSLS…VTRC). 2 disulfides stabilise this stretch: C49/C94 and C244/C295. The N-linked (GlcNAc...) asparagine glycan is linked to N78.

In terms of tissue distribution, expressed in NK-cells.

It is found in the secreted. This is Putative killer cell immunoglobulin-like receptor-like protein KIR3DX1 (KIR3DX1) from Homo sapiens (Human).